The primary structure comprises 570 residues: Sulfite reductase [NADPH] hemoprotein beta-component (570 aa).

The [4Fe-4S] cluster site is built by Cys-434, Cys-440, Cys-479, and Cys-483. Cys-483 contacts siroheme.

It belongs to the nitrite and sulfite reductase 4Fe-4S domain family. Alpha(8)-beta(8). The alpha component is a flavoprotein, the beta component is a hemoprotein. Requires siroheme as cofactor. [4Fe-4S] cluster is required as a cofactor.

It catalyses the reaction hydrogen sulfide + 3 NADP(+) + 3 H2O = sulfite + 3 NADPH + 4 H(+). It participates in sulfur metabolism; hydrogen sulfide biosynthesis; hydrogen sulfide from sulfite (NADPH route): step 1/1. Functionally, component of the sulfite reductase complex that catalyzes the 6-electron reduction of sulfite to sulfide. This is one of several activities required for the biosynthesis of L-cysteine from sulfate. In Salmonella gallinarum (strain 287/91 / NCTC 13346), this protein is Sulfite reductase [NADPH] hemoprotein beta-component.